The primary structure comprises 398 residues: Probable peptidoglycan glycosyltransferase FtsW (398 aa).

At 1–20 (MSTQAIRGARGLVLKWGAGR) the chain is on the cytoplasmic side. Residues 21–41 (FYLDTVLLSVSLGLMLFGFVM) form a helical membrane-spanning segment. Over 42 to 57 (VSSASLHLGEKMASDS) the chain is Periplasmic. A helical membrane pass occupies residues 58–78 (FYFPKHQLVHILLGLAAGWGA). Residues 79-92 (ARVRLDTLERHSRS) lie on the Cytoplasmic side of the membrane. A helical membrane pass occupies residues 93-113 (LFWAGIALLVLVLIPGVGKSV). The Periplasmic segment spans residues 114–121 (NGSVRWIN). A helical membrane pass occupies residues 122–142 (LFGLRVQVSEVFKLVAAIYVA). The Cytoplasmic portion of the chain corresponds to 143–153 (GYISRHLDTVR). A helical membrane pass occupies residues 154-174 (TSVKGMIFPLSLLAIGAVLLL). The Periplasmic portion of the chain corresponds to 175–177 (KEP). Residues 178-198 (DFGATAVVMATALGMLFLAGA) traverse the membrane as a helical segment. Arginine 199 is a topological domain (cytoplasmic). The helical transmembrane segment at 200 to 220 (LWVFVGLLGLVAVAGTVLIYT) threads the bilayer. Topologically, residues 221–289 (AEYRLRRVLS…LFSVIGEELG (69 aa)) are periplasmic. Residues 290 to 310 (LWGATTVILLFAIVVWRALAI) form a helical membrane-spanning segment. Residues 311 to 318 (GRLAERSG) are Cytoplasmic-facing. Residues 319–339 (NLFAAFLAYGIGIWLGLQSFI) traverse the membrane as a helical segment. At 340–355 (NMGVNMGMLPTKGLTL) the chain is on the periplasmic side. The helical transmembrane segment at 356–376 (PLMSYGGGSMMVVCAAIGLLF) threads the bilayer. Residues 377 to 398 (RIRSEAVASFLGNGRKGLWPGV) lie on the Cytoplasmic side of the membrane.

The protein belongs to the SEDS family. FtsW subfamily.

The protein localises to the cell inner membrane. It catalyses the reaction [GlcNAc-(1-&gt;4)-Mur2Ac(oyl-L-Ala-gamma-D-Glu-L-Lys-D-Ala-D-Ala)](n)-di-trans,octa-cis-undecaprenyl diphosphate + beta-D-GlcNAc-(1-&gt;4)-Mur2Ac(oyl-L-Ala-gamma-D-Glu-L-Lys-D-Ala-D-Ala)-di-trans,octa-cis-undecaprenyl diphosphate = [GlcNAc-(1-&gt;4)-Mur2Ac(oyl-L-Ala-gamma-D-Glu-L-Lys-D-Ala-D-Ala)](n+1)-di-trans,octa-cis-undecaprenyl diphosphate + di-trans,octa-cis-undecaprenyl diphosphate + H(+). It functions in the pathway cell wall biogenesis; peptidoglycan biosynthesis. Functionally, peptidoglycan polymerase that is essential for cell division. The sequence is that of Probable peptidoglycan glycosyltransferase FtsW from Methylococcus capsulatus (strain ATCC 33009 / NCIMB 11132 / Bath).